A 491-amino-acid polypeptide reads, in one-letter code: Nickel-binding protein NikA (491 aa).

An N-terminal signal peptide occupies residues 1-18; the sequence is MKFKRLATIFSAVLVLSG. Cys19 is lipidated: N-palmitoyl cysteine. Cys19 carries S-diacylglycerol cysteine lipidation.

This sequence belongs to the bacterial solute-binding protein 5 family. As to quaternary structure, the complex is composed of two ATP-binding proteins (NikD and NikE), two transmembrane proteins (NikB and NikC) and a solute-binding protein (NikA).

The protein localises to the cell membrane. Functionally, part of the ABC transporter complex NikABCDE (Opp2) involved in nickel import. Binds nickel and transfers it to the membrane-bound permease. Required for full urease activity and plays a significant role in the virulence of S.aureus during urinary tract infection (UTI). May bind nickel via a nickel-chelator. This is Nickel-binding protein NikA from Staphylococcus aureus (strain NCTC 8325 / PS 47).